A 286-amino-acid polypeptide reads, in one-letter code: UDP-3-O-acyl-N-acetylglucosamine deacetylase (286 aa).

3 residues coordinate Zn(2+): His-81, His-240, and Asp-244. His-266 (proton donor) is an active-site residue.

It belongs to the LpxC family. It depends on Zn(2+) as a cofactor.

The enzyme catalyses a UDP-3-O-[(3R)-3-hydroxyacyl]-N-acetyl-alpha-D-glucosamine + H2O = a UDP-3-O-[(3R)-3-hydroxyacyl]-alpha-D-glucosamine + acetate. The protein operates within glycolipid biosynthesis; lipid IV(A) biosynthesis; lipid IV(A) from (3R)-3-hydroxytetradecanoyl-[acyl-carrier-protein] and UDP-N-acetyl-alpha-D-glucosamine: step 2/6. Its function is as follows. Catalyzes the hydrolysis of UDP-3-O-myristoyl-N-acetylglucosamine to form UDP-3-O-myristoylglucosamine and acetate, the committed step in lipid A biosynthesis. In Francisella tularensis subsp. tularensis (strain FSC 198), this protein is UDP-3-O-acyl-N-acetylglucosamine deacetylase.